Reading from the N-terminus, the 285-residue chain is Golgi to ER traffic protein 2 (285 aa).

The segment covering 1-10 (MSELTEAEKR) has biased composition (basic and acidic residues). Disordered regions lie at residues 1-72 (MSEL…KEDS) and 87-106 (MQGQ…PDLL). Ser-2 carries the N-acetylserine modification. Over 2-148 (SELTEAEKRR…LDYHDYLLNR (147 aa)) the chain is Cytoplasmic. Residues 11–20 (RLLRERRQKK) show a composition bias toward basic residues. A compositionally biased stretch (polar residues) spans 24–42 (GGASSRLNKITGQASSHLN). Ser-45 carries the phosphoserine modification. Residues 49 to 60 (APSAAKTTPPAS) are compositionally biased toward low complexity. Residues 93 to 104 (GKSTPQDSSTPD) show a composition bias toward polar residues. A helical membrane pass occupies residues 149 to 169 (LKAWTILVKWVFFLLPYLYLI). The Lumenal portion of the chain corresponds to 170 to 196 (TRPNSSVWPAYAFTQSAWFAPLRNPSN). N-linked (GlcNAc...) asparagine glycans are attached at residues Asn-173 and Asn-196. The chain crosses the membrane as a helical span at residues 197–216 (FTRIFATFEFLSISIYYQLL). The Cytoplasmic portion of the chain corresponds to 217 to 263 (KNVEHKSKIKNLQDTNKLVKLVSLVPEGVIPVANLKGKLITLLQYWD). The chain crosses the membrane as a helical span at residues 264 to 284 (LLSMLITDISFVLIVLGLLTY). Leu-285 is a topological domain (lumenal).

It belongs to the GET2 family. As to quaternary structure, component of the Golgi to ER traffic (GET) complex, which is composed of GET1, GET2 and GET3. Within the complex, GET1 and GET2 form a heterotetramer which is stabilized by phosphatidylinositol binding and which binds to the GET3 homodimer.

The protein localises to the endoplasmic reticulum membrane. It localises to the golgi apparatus membrane. In terms of biological role, required for the post-translational delivery of tail-anchored (TA) proteins to the endoplasmic reticulum. Together with GET1, acts as a membrane receptor for soluble GET3, which recognizes and selectively binds the transmembrane domain of TA proteins in the cytosol. The GET complex cooperates with the HDEL receptor ERD2 to mediate the ATP-dependent retrieval of resident ER proteins that contain a C-terminal H-D-E-L retention signal from the Golgi to the ER. Involved in DNA replication and DNA damage response and also in cell wall function. In Saccharomyces cerevisiae (strain RM11-1a) (Baker's yeast), this protein is Golgi to ER traffic protein 2.